A 289-amino-acid polypeptide reads, in one-letter code: Acetyl-coenzyme A carboxylase carboxyl transferase subunit beta (289 aa).

A CoA carboxyltransferase N-terminal domain is found at 28–289 (VMTKCPKCKK…QGGEMAVWQS (262 aa)). Positions 32, 35, 51, and 54 each coordinate Zn(2+). Residues 32–54 (CPKCKKIMYTKEVLKNLKVCVNC) form a C4-type zinc finger.

It belongs to the AccD/PCCB family. Acetyl-CoA carboxylase is a heterohexamer composed of biotin carboxyl carrier protein (AccB), biotin carboxylase (AccC) and two subunits each of ACCase subunit alpha (AccA) and ACCase subunit beta (AccD). Zn(2+) is required as a cofactor.

Its subcellular location is the cytoplasm. It carries out the reaction N(6)-carboxybiotinyl-L-lysyl-[protein] + acetyl-CoA = N(6)-biotinyl-L-lysyl-[protein] + malonyl-CoA. Its pathway is lipid metabolism; malonyl-CoA biosynthesis; malonyl-CoA from acetyl-CoA: step 1/1. Its function is as follows. Component of the acetyl coenzyme A carboxylase (ACC) complex. Biotin carboxylase (BC) catalyzes the carboxylation of biotin on its carrier protein (BCCP) and then the CO(2) group is transferred by the transcarboxylase to acetyl-CoA to form malonyl-CoA. The chain is Acetyl-coenzyme A carboxylase carboxyl transferase subunit beta from Bacillus thuringiensis (strain Al Hakam).